We begin with the raw amino-acid sequence, 503 residues long: Aromatase (503 aa).

Helical transmembrane passes span 19–39 (EVVPIASIAILLLTGFLLLVW), 53–73 (FLGIGPLISHCRFLWMGIGSA), and 303–323 (MLIAAPDTMSVSVFFMLFLIA). D309 and M374 together coordinate substrate. C437 contacts heme.

Belongs to the cytochrome P450 family. Heme serves as cofactor.

Its subcellular location is the endoplasmic reticulum membrane. The protein localises to the microsome membrane. It carries out the reaction testosterone + 3 reduced [NADPH--hemoprotein reductase] + 3 O2 = 17beta-estradiol + formate + 3 oxidized [NADPH--hemoprotein reductase] + 4 H2O + 4 H(+). The catalysed reaction is androst-4-ene-3,17-dione + 3 reduced [NADPH--hemoprotein reductase] + 3 O2 = estrone + formate + 3 oxidized [NADPH--hemoprotein reductase] + 4 H2O + 4 H(+). It catalyses the reaction androst-4-ene-3,17-dione + reduced [NADPH--hemoprotein reductase] + O2 = 19-hydroxyandrost-4-ene-3,17-dione + oxidized [NADPH--hemoprotein reductase] + H2O + H(+). The enzyme catalyses 19-hydroxyandrost-4-ene-3,17-dione + reduced [NADPH--hemoprotein reductase] + O2 = 19-oxo-androst-4-ene-3,17-dione + oxidized [NADPH--hemoprotein reductase] + 2 H2O + H(+). It carries out the reaction 19-oxo-androst-4-ene-3,17-dione + reduced [NADPH--hemoprotein reductase] + O2 = estrone + formate + oxidized [NADPH--hemoprotein reductase] + H2O + 2 H(+). The catalysed reaction is estrone + reduced [NADPH--hemoprotein reductase] + O2 = 2-hydroxyestrone + oxidized [NADPH--hemoprotein reductase] + H2O + H(+). It catalyses the reaction 17beta-hydroxy-5alpha-androstan-3-one + reduced [NADPH--hemoprotein reductase] + O2 = 17beta,19-dihydroxy-3-oxo-5alpha-androstanone + oxidized [NADPH--hemoprotein reductase] + H2O + H(+). The enzyme catalyses 17beta,19-dihydroxy-3-oxo-5alpha-androstanone + reduced [NADPH--hemoprotein reductase] + O2 = 17beta-hydroxy-3,19-dioxo-5alpha-androstanone + oxidized [NADPH--hemoprotein reductase] + 2 H2O + H(+). It carries out the reaction 17beta-hydroxy-3,19-dioxo-5alpha-androstanone + reduced [NADPH--hemoprotein reductase] + O2 = 17beta-hydroxy-3-oxo-19-nor-5alpha-androst-1-ene + formate + oxidized [NADPH--hemoprotein reductase] + H2O + 2 H(+). It functions in the pathway steroid hormone biosynthesis. A cytochrome P450 monooxygenase that catalyzes the conversion of C19 androgens, androst-4-ene-3,17-dione (androstenedione) and testosterone to the C18 estrogens, estrone and estradiol, respectively. Catalyzes three successive oxidations of C19 androgens: two conventional oxidations at C19 yielding 19-hydroxy and 19-oxo/19-aldehyde derivatives, followed by a third oxidative aromatization step that involves C1-beta hydrogen abstraction combined with cleavage of the C10-C19 bond to yield a phenolic A ring and formic acid. Alternatively, the third oxidative reaction yields a 19-norsteroid and formic acid. Converts dihydrotestosterone to delta1,10-dehydro 19-nordihydrotestosterone and may play a role in homeostasis of this potent androgen. Also displays 2-hydroxylase activity toward estrone. Mechanistically, uses molecular oxygen inserting one oxygen atom into a substrate, and reducing the second into a water molecule, with two electrons provided by NADPH via cytochrome P450 reductase (CPR; NADPH-ferrihemoprotein reductase). The chain is Aromatase (CYP19A1) from Capra hircus (Goat).